We begin with the raw amino-acid sequence, 500 residues long: Probable cytosol aminopeptidase (500 aa).

Positions 265 and 270 each coordinate Mn(2+). Lys-277 is an active-site residue. Positions 288, 347, and 349 each coordinate Mn(2+). Arg-351 is a catalytic residue.

It belongs to the peptidase M17 family. Mn(2+) serves as cofactor.

Its subcellular location is the cytoplasm. The catalysed reaction is Release of an N-terminal amino acid, Xaa-|-Yaa-, in which Xaa is preferably Leu, but may be other amino acids including Pro although not Arg or Lys, and Yaa may be Pro. Amino acid amides and methyl esters are also readily hydrolyzed, but rates on arylamides are exceedingly low.. The enzyme catalyses Release of an N-terminal amino acid, preferentially leucine, but not glutamic or aspartic acids.. Presumably involved in the processing and regular turnover of intracellular proteins. Catalyzes the removal of unsubstituted N-terminal amino acids from various peptides. This is Probable cytosol aminopeptidase from Corynebacterium diphtheriae (strain ATCC 700971 / NCTC 13129 / Biotype gravis).